Here is a 367-residue protein sequence, read N- to C-terminus: Pectate lyase 1 (367 aa).

The first 21 residues, 1–21, serve as a signal peptide directing secretion; sequence MASPCLIAFLVFLCAIVSCCS. Disulfide bonds link C28-C45 and C128-C147. N148 carries N-linked (GlcNAc...) asparagine glycosylation. Residue D170 participates in Ca(2+) binding. N-linked (GlcNAc...) asparagine glycosylation is present at N178. The Ca(2+) site is built by D194 and D198. Residue R250 is part of the active site. C306 and C312 are disulfide-bonded.

Belongs to the polysaccharide lyase 1 family. Amb a subfamily. Ca(2+) serves as cofactor.

It catalyses the reaction Eliminative cleavage of (1-&gt;4)-alpha-D-galacturonan to give oligosaccharides with 4-deoxy-alpha-D-galact-4-enuronosyl groups at their non-reducing ends.. The protein operates within glycan metabolism; pectin degradation; 2-dehydro-3-deoxy-D-gluconate from pectin: step 2/5. Has pectate lyase activity. This chain is Pectate lyase 1, found in Juniperus virginiana (Eastern redcedar).